A 100-amino-acid chain; its full sequence is Small ribosomal subunit protein uS14c (100 aa).

It belongs to the universal ribosomal protein uS14 family. In terms of assembly, part of the 30S ribosomal subunit.

The protein localises to the plastid. Its subcellular location is the chloroplast. In terms of biological role, binds 16S rRNA, required for the assembly of 30S particles. The chain is Small ribosomal subunit protein uS14c from Populus alba (White poplar).